A 152-amino-acid chain; its full sequence is Transcriptional regulator MraZ (152 aa).

SpoVT-AbrB domains lie at alanine 5 to glutamate 52 and alanine 81 to serine 124.

Belongs to the MraZ family. Forms oligomers.

It localises to the cytoplasm. It is found in the nucleoid. The polypeptide is Transcriptional regulator MraZ (Shewanella baltica (strain OS195)).